The chain runs to 843 residues: Protein translocase subunit SecA 1 (843 aa).

Residues Q91, 109-113 (GEGKT), and D498 contribute to the ATP site. The segment covering 799–813 (EAKHVSAEDGKEKVK) has biased composition (basic and acidic residues). Residues 799-826 (EAKHVSAEDGKEKVKPKPIVKGDQVGRN) are disordered. Residues C829, C831, C840, and H841 each coordinate Zn(2+).

Belongs to the SecA family. As to quaternary structure, monomer and homodimer. Part of the essential Sec protein translocation apparatus which comprises SecA, SecYEG and auxiliary proteins SecDF. Other proteins may also be involved. Requires Zn(2+) as cofactor.

It localises to the cell membrane. The protein resides in the cytoplasm. It catalyses the reaction ATP + H2O + cellular proteinSide 1 = ADP + phosphate + cellular proteinSide 2.. In terms of biological role, part of the Sec protein translocase complex. Interacts with the SecYEG preprotein conducting channel. Has a central role in coupling the hydrolysis of ATP to the transfer of proteins into and across the cell membrane, serving as an ATP-driven molecular motor driving the stepwise translocation of polypeptide chains across the membrane. This is Protein translocase subunit SecA 1 from Staphylococcus aureus (strain N315).